The following is a 327-amino-acid chain: GTPase Obg (327 aa).

One can recognise an Obg domain in the interval 1–159 (MQFIDQANII…WEVQLELKLL (159 aa)). An OBG-type G domain is found at 160–327 (AEVGIIGLPN…SLLSEVWKRI (168 aa)). Residues 166 to 173 (GLPNAGKS), 191 to 195 (FTTLI), 213 to 216 (DIPG), 280 to 283 (NKME), and 309 to 311 (SSS) each bind ATP. Mg(2+) contacts are provided by serine 173 and threonine 193.

This sequence belongs to the TRAFAC class OBG-HflX-like GTPase superfamily. OBG GTPase family. Monomer. Mg(2+) is required as a cofactor.

It localises to the cytoplasm. Functionally, an essential GTPase which binds GTP, GDP and possibly (p)ppGpp with moderate affinity, with high nucleotide exchange rates and a fairly low GTP hydrolysis rate. Plays a role in control of the cell cycle, stress response, ribosome biogenesis and in those bacteria that undergo differentiation, in morphogenesis control. This is GTPase Obg from Prochlorococcus marinus (strain MIT 9301).